Here is a 517-residue protein sequence, read N- to C-terminus: GMP synthase [glutamine-hydrolyzing] (517 aa).

The 192-residue stretch at 11 to 202 (KIIVLDFGSQ…AFKVCGAKAN (192 aa)) folds into the Glutamine amidotransferase type-1 domain. The active-site Nucleophile is cysteine 88. Catalysis depends on residues histidine 176 and glutamate 178. One can recognise a GMPS ATP-PPase domain in the interval 203–392 (WTMDDFIEMQ…LGIPHDLVWR (190 aa)). Position 230–236 (230–236 (SGGVDSS)) interacts with ATP.

Homodimer.

It carries out the reaction XMP + L-glutamine + ATP + H2O = GMP + L-glutamate + AMP + diphosphate + 2 H(+). It participates in purine metabolism; GMP biosynthesis; GMP from XMP (L-Gln route): step 1/1. Catalyzes the synthesis of GMP from XMP. This Lactobacillus johnsonii (strain CNCM I-12250 / La1 / NCC 533) protein is GMP synthase [glutamine-hydrolyzing].